A 1913-amino-acid chain; its full sequence is Protein TIC 214 (1913 aa).

The next 5 membrane-spanning stretches (helical) occupy residues 18–38 (IINSVVVVGLYYGFLTTFSIG), 64–84 (FITGQLMMFISIYYAPLHLAL), 124–144 (LSIQCVFLTNLIFQLFNHLML), 172–192 (VGWLIGHILFMKWVGLVVSWI), and 214–234 (LKSAIAQILSIIFFIACVNYL). Disordered regions lie at residues 245–330 (KLNE…ETEE), 707–734 (YTDKNQNRDQDPNPNTDNTTTENDNSDT), and 1605–1652 (EKED…RKKK). Residues 260–289 (KESQKSKESEEERDVEKETTSETKETKQEQ) are compositionally biased toward basic and acidic residues. Residues 303–314 (EKEDPDKIDETE) show a composition bias toward acidic residues. The span at 315–330 (EIRVNGKEKKKDETEE) shows a compositional bias: basic and acidic residues. Positions 718–729 (PNPNTDNTTTEN) are enriched in low complexity.

It belongs to the TIC214 family. In terms of assembly, part of the Tic complex.

The protein resides in the plastid. Its subcellular location is the chloroplast inner membrane. Its function is as follows. Involved in protein precursor import into chloroplasts. May be part of an intermediate translocation complex acting as a protein-conducting channel at the inner envelope. The polypeptide is Protein TIC 214 (Acorus calamus var. americanus (American sweet flag)).